Reading from the N-terminus, the 206-residue chain is ATP synthase subunit b (206 aa).

The chain crosses the membrane as a helical span at residues 10–30 (LLKPFVSTAAICLLVAGTVVL).

It belongs to the ATPase B chain family. As to quaternary structure, F-type ATPases have 2 components, F(1) - the catalytic core - and F(0) - the membrane proton channel. F(1) has five subunits: alpha(3), beta(3), gamma(1), delta(1), epsilon(1). F(0) has three main subunits: a(1), b(2) and c(10-14). The alpha and beta chains form an alternating ring which encloses part of the gamma chain. F(1) is attached to F(0) by a central stalk formed by the gamma and epsilon chains, while a peripheral stalk is formed by the delta and b chains.

The protein resides in the cell inner membrane. F(1)F(0) ATP synthase produces ATP from ADP in the presence of a proton or sodium gradient. F-type ATPases consist of two structural domains, F(1) containing the extramembraneous catalytic core and F(0) containing the membrane proton channel, linked together by a central stalk and a peripheral stalk. During catalysis, ATP synthesis in the catalytic domain of F(1) is coupled via a rotary mechanism of the central stalk subunits to proton translocation. In terms of biological role, component of the F(0) channel, it forms part of the peripheral stalk, linking F(1) to F(0). This chain is ATP synthase subunit b, found in Geobacter sulfurreducens (strain ATCC 51573 / DSM 12127 / PCA).